The following is a 388-amino-acid chain: Lipid-A-disaccharide synthase (388 aa).

The protein belongs to the LpxB family.

It carries out the reaction a lipid X + a UDP-2-N,3-O-bis[(3R)-3-hydroxyacyl]-alpha-D-glucosamine = a lipid A disaccharide + UDP + H(+). It participates in bacterial outer membrane biogenesis; LPS lipid A biosynthesis. In terms of biological role, condensation of UDP-2,3-diacylglucosamine and 2,3-diacylglucosamine-1-phosphate to form lipid A disaccharide, a precursor of lipid A, a phosphorylated glycolipid that anchors the lipopolysaccharide to the outer membrane of the cell. The polypeptide is Lipid-A-disaccharide synthase (Burkholderia thailandensis (strain ATCC 700388 / DSM 13276 / CCUG 48851 / CIP 106301 / E264)).